The chain runs to 21 residues: uncharacterized protein (21 aa).

This is an uncharacterized protein from Methanococcus voltae.